The chain runs to 505 residues: 2,3-bisphosphoglycerate-independent phosphoglycerate mutase (505 aa).

2 residues coordinate Mn(2+): aspartate 11 and serine 61. Serine 61 (phosphoserine intermediate) is an active-site residue. Substrate-binding positions include histidine 122, 152-153 (RD), arginine 183, arginine 189, 259-262 (RTDR), and lysine 332. 5 residues coordinate Mn(2+): aspartate 399, histidine 403, aspartate 440, histidine 441, and histidine 458.

It belongs to the BPG-independent phosphoglycerate mutase family. Monomer. It depends on Mn(2+) as a cofactor.

It catalyses the reaction (2R)-2-phosphoglycerate = (2R)-3-phosphoglycerate. Its pathway is carbohydrate degradation; glycolysis; pyruvate from D-glyceraldehyde 3-phosphate: step 3/5. Catalyzes the interconversion of 2-phosphoglycerate and 3-phosphoglycerate. This is 2,3-bisphosphoglycerate-independent phosphoglycerate mutase from Flavobacterium johnsoniae (strain ATCC 17061 / DSM 2064 / JCM 8514 / BCRC 14874 / CCUG 350202 / NBRC 14942 / NCIMB 11054 / UW101) (Cytophaga johnsonae).